The sequence spans 311 residues: Methionyl-tRNA formyltransferase (311 aa).

(6S)-5,6,7,8-tetrahydrofolate is bound at residue 110–113 (SLLP).

Belongs to the Fmt family.

It catalyses the reaction L-methionyl-tRNA(fMet) + (6R)-10-formyltetrahydrofolate = N-formyl-L-methionyl-tRNA(fMet) + (6S)-5,6,7,8-tetrahydrofolate + H(+). Its function is as follows. Attaches a formyl group to the free amino group of methionyl-tRNA(fMet). The formyl group appears to play a dual role in the initiator identity of N-formylmethionyl-tRNA by promoting its recognition by IF2 and preventing the misappropriation of this tRNA by the elongation apparatus. In Streptococcus pneumoniae serotype 19F (strain G54), this protein is Methionyl-tRNA formyltransferase.